A 1224-amino-acid chain; its full sequence is DNA-directed RNA polymerase subunit beta (1224 aa).

Belongs to the RNA polymerase beta chain family. As to quaternary structure, the RNAP catalytic core consists of 2 alpha, 1 beta, 1 beta' and 1 omega subunit. When a sigma factor is associated with the core the holoenzyme is formed, which can initiate transcription.

The catalysed reaction is RNA(n) + a ribonucleoside 5'-triphosphate = RNA(n+1) + diphosphate. DNA-dependent RNA polymerase catalyzes the transcription of DNA into RNA using the four ribonucleoside triphosphates as substrates. The chain is DNA-directed RNA polymerase subunit beta from Pelotomaculum thermopropionicum (strain DSM 13744 / JCM 10971 / SI).